We begin with the raw amino-acid sequence, 319 residues long: Homoserine O-acetyltransferase (319 aa).

The active-site Acyl-thioester intermediate is Cys142. The substrate site is built by Lys163 and Ser192. Residue His235 is the Proton acceptor of the active site. Glu237 is an active-site residue. Position 249 (Arg249) interacts with substrate.

This sequence belongs to the MetA family.

The protein localises to the cytoplasm. It carries out the reaction L-homoserine + acetyl-CoA = O-acetyl-L-homoserine + CoA. It participates in amino-acid biosynthesis; L-methionine biosynthesis via de novo pathway; O-acetyl-L-homoserine from L-homoserine: step 1/1. Transfers an acetyl group from acetyl-CoA to L-homoserine, forming acetyl-L-homoserine. The protein is Homoserine O-acetyltransferase of Lactococcus lactis subsp. cremoris (strain MG1363).